A 491-amino-acid chain; its full sequence is Serine/threonine-protein kinase 3/4 (491 aa).

The segment at 1–24 (MEEVQRRQHPHPRRSLKKLSEDSL) is disordered. Residues 7-17 (RQHPHPRRSLK) are compositionally biased toward basic residues. The Protein kinase domain occupies 32–283 (FDVLEKLGEG…ATQLLQHPFI (252 aa)). ATP-binding positions include 38–46 (LGEGSYGSV) and lysine 61. The active-site Proton acceptor is aspartate 151. Threonine 185 is subject to Phosphothreonine; by autocatalysis. Positions 292–334 (LRDLITDMMEIKLKRQEEQQRDLDQDDEENSEEDDMDSGTMVR) form a coiled coil. 2 disordered regions span residues 307–394 (QEEQ…IQQS) and 406–435 (EKEN…PQDG). Positions 315–328 (DQDDEENSEEDDMD) are enriched in acidic residues. 2 stretches are compositionally biased toward polar residues: residues 363-373 (TLDSQMGTMVI) and 410-428 (QANS…SSDN). Residues 437 to 484 (FESLKSWSVEELQRRLASLDPTMEQEIEEIRQRYQAKRQPILDAIDAK) enclose the SARAH domain. Positions 442 to 475 (SWSVEELQRRLASLDPTMEQEIEEIRQRYQAKRQ) form a coiled coil.

Belongs to the protein kinase superfamily. STE Ser/Thr protein kinase family. STE20 subfamily. As to quaternary structure, homodimer; mediated via the coiled-coil region. Mg(2+) is required as a cofactor. In terms of processing, proteolytically cleaved by caspase-3 during apoptosis at Asp-328 resulting in a 37 kDa form. Proteolytic cleavage results in kinase activation and nuclear translocation of the truncated form (MST1/N).

It localises to the cytoplasm. Its subcellular location is the nucleus. It carries out the reaction L-seryl-[protein] + ATP = O-phospho-L-seryl-[protein] + ADP + H(+). The catalysed reaction is L-threonyl-[protein] + ATP = O-phospho-L-threonyl-[protein] + ADP + H(+). Its activity is regulated as follows. Inhibited by the C-terminal non-catalytic region. Activated by caspase-cleavage. Full activation also requires homodimerization and autophosphorylation of Thr-185. Its function is as follows. Stress-activated, pro-apoptotic kinase which, following caspase-cleavage, enters the nucleus and induces chromatin condensation followed by internucleosomal DNA fragmentation. Key component of the Hippo signaling pathway which plays a pivotal role in organ size control and tumor suppression by restricting proliferation and promoting apoptosis. The core of this pathway is composed of a kinase cascade wherein stk3/mst2 and stk4/mst1, in complex with its regulatory protein sav1, phosphorylates and activates lats1/2 in complex with its regulatory protein mob1, which in turn phosphorylates and inactivates yap1 oncoprotein and wwtr1/taz. Phosphorylation of yap1 by lats2 inhibits its translocation into the nucleus to regulate cellular genes important for cell proliferation, cell death, and cell migration. Phosphorylates 'Ser-14' of histone H2B (H2BS14ph) during apoptosis. This is Serine/threonine-protein kinase 3/4 (STK4) from Squalus acanthias (Spiny dogfish).